Reading from the N-terminus, the 1779-residue chain is MLPFWKRLLYAAVIAGALVGADAQFWKTAGTAGSIQDSVKHYNRNEPKFPIDDSYDIVDSAGVARGDLPPKNCTAGYAGCVPKCIAEKGNRGLPGPLGPTGLKGEMGFPGMEGPSGDKGQKGDPGPYGQRGDKGERGSPGLHGQAGVPGVQGPAGNPGAPGINGKDGCDGQDGIPGLEGLSGMPGPRGYAGQLGSKGEKGEPAKENGDYAKGEKGEPGWRGTAGLAGPQGFPGEKGERGDSGPYGAKGPRGEHGLKGEKGASCYGPMKPGAPGIKGEKGEPASSFPVKPTHTVMGPRGDMGQKGEPGLVGRKGEPGPEGDTGLDGQKGEKGLPGGPGDRGRQGNFGPPGSTGQKGDRGEPGLNGLPGNPGQKGEPGRAGATGKPGLLGPPGPPGGGRGTPGPPGPKGPRGYVGAPGPQGLNGVDGLPGPQGYNGQKGGAGLPGRPGNEGPPGKKGEKGTAGLNGPKGSIGPIGHPGPPGPEGQKGDAGLPGYGIQGSKGDAGIPGYPGLKGSKGERGFKGNAGAPGDSKLGRPGTPGAAGAPGQKGDAGRPGTPGQKGDMGIKGDVGGKCSSCRAGPKGDKGTSGLPGIPGKDGARGPPGERGYPGERGHDGINGQTGPPGEKGEDGRTGLPGATGEPGKPALCDLSLIEPLKGDKGYPGAPGAKGVQGFKGAEGLPGIPGPKGEFGFKGEKGLSGAPGNDGTPGRAGRDGYPGIPGQSIKGEPGFHGRDGAKGDKGSFGRSGEKGEPGSCALDEIKMPAKGNKGEPGQTGMPGPPGEDGSPGERGYTGLKGNTGPQGPPGVEGPRGLNGPRGEKGNQGAVGVPGNPGKDGLRGIPGRNGQPGPRGEPGISRPGPMGPPGLNGLQGEKGDRGPTGPIGFPGADGSVGYPGDRGDAGLPGVSGRPGIVGEKGDVGPIGPAGVAGPPGVPGIDGVRGRDGAKGEPGSPGLVGMPGNKGDRGAPGNDGPKGFAGVTGAPGKRGPAGIPGVSGAKGDKGATGLTGNDGPVGGRGPPGAPGLMGIKGDQGLAGAPGQQGLDGMPGEKGNQGFPGLDGPPGLPGDASEKGQKGEPGPSGLRGDTGPAGTPGWPGEKGLPGLAVHGRAGPPGEKGDQGRSGIDGRDGINGEKGEQGLQGVWGQPGEKGSVGAPGIPGAPGMDGLPGAAGAPGAVGYPGDRGDKGEPGLSGLPGLKGETGPVGLQGFTGAPGPKGERGIRGQPGLPATVPDIRGDKGSQGERGYTGEKGEQGERGLTGPAGVAGAKGDRGLQGPPGASGLNGIPGAKGDIGPRGEIGYPGVTIKGEKGLPGRPGRNGRQGLIGAPGLIGERGLPGLAGEPGLVGLPGPIGPAGSKGERGLAGSPGQPGQDGFPGAPGLKGDTGPQGFKGERGLNGFEGQKGDKGDRGLQGPSGLPGLVGQKGDTGYPGLNGNDGPVGAPGERGFTGPKGRDGRDGTPGLPGQKGEPGMLPPPGPKGEPGQPGRNGPKGEPGRPGERGLIGIQGERGEKGERGLIGETGNVGRPGPKGDRGEPGERGYEGAIGLIGQKGEPGAPAPAALDYLTGILITRHSQSETVPACSAGHTELWTGYSLLYVDGNDYAHNQDLGSPGSCVPRFSTLPVLSCGQNNVCNYASRNDKTFWLTTNAAIPMMPVENIEIRQYISRCVVCEAPANVIAVHSQTIEVPDCPNGWEGLWIGYSFLMHTAVGNGGGGQALQSPGSCLEDFRATPFIECNGAKGTCHFYETMTSFWMYNLESSQPFERPQQQTIKAGERQSHVSRCQVCMKNSS.

The N-terminal stretch at 1-23 is a signal peptide; sequence MLPFWKRLLYAAVIAGALVGADA. Asn72 is a glycosylation site (N-linked (GlcNAc...) asparagine). Disordered regions lie at residues 89-643, 655-1187, 1200-1285, and 1336-1530; these read GNRG…KPAL, DKGY…LPGL, TGAP…IGPR, and GLPG…RGYE. Positions 144–163 are enriched in low complexity; it reads QAGVPGVQGPAGNPGAPGIN. Basic and acidic residues-rich tracts occupy residues 196 to 217 and 249 to 259; these read KGEK…KGEP and PRGEHGLKGEK. The span at 360–369 shows a compositional bias: low complexity; the sequence is PGLNGLPGNP. Residues 434-443 are compositionally biased toward gly residues; it reads GQKGGAGLPG. Residues 531 to 545 are compositionally biased toward low complexity; sequence GRPGTPGAAGAPGQK. Residues 724-747 are compositionally biased toward basic and acidic residues; it reads PGFHGRDGAKGDKGSFGRSGEKGE. Low complexity-rich tracts occupy residues 913-931 and 1015-1036; these read VGPI…PGID and PGLM…QGLD. A compositionally biased stretch (basic and acidic residues) spans 1106 to 1127; the sequence is EKGDQGRSGIDGRDGINGEKGE. Positions 1151–1170 are enriched in low complexity; that stretch reads APGMDGLPGAAGAPGAVGYP. 3 stretches are compositionally biased toward basic and acidic residues: residues 1224 to 1245, 1496 to 1505, and 1517 to 1529; these read IRGD…EQGE, ERGEKGERGL, and PKGD…ERGY. The 224-residue stretch at 1555–1778 folds into the Collagen IV NC1 domain; it reads GILITRHSQS…SRCQVCMKNS (224 aa). 6 disulfide bridges follow: Cys1570-Cys1659, Cys1603-Cys1656, Cys1615-Cys1621, Cys1678-Cys1774, Cys1712-Cys1771, and Cys1724-Cys1731.

Belongs to the type IV collagen family. As to quaternary structure, trimers of two alpha 1(IV) and one alpha 2(IV) chain. Type IV collagen forms a mesh-like network linked through intermolecular interactions between 7S domains and between NC1 domains. Post-translationally, prolines at the third position of the tripeptide repeating unit (G-X-Y) are hydroxylated in some or all of the chains. Type IV collagens contain numerous cysteine residues which are involved in inter- and intramolecular disulfide bonding. 12 of these, located in the NC1 domain, are conserved in all known type IV collagens.

It is found in the secreted. The protein localises to the extracellular space. It localises to the extracellular matrix. The protein resides in the basement membrane. In terms of biological role, collagen type IV is specific for basement membranes. The chain is Collagen alpha-1(IV) chain from Drosophila melanogaster (Fruit fly).